A 130-amino-acid polypeptide reads, in one-letter code: Small ribosomal subunit protein uS9 (130 aa).

The protein belongs to the universal ribosomal protein uS9 family.

The protein is Small ribosomal subunit protein uS9 of Buchnera aphidicola subsp. Acyrthosiphon pisum (strain Tuc7).